The sequence spans 307 residues: Ribonuclease Z (307 aa).

The Zn(2+) site is built by His-61, His-63, Asp-65, His-66, His-138, Asp-208, and His-264. Residue Asp-65 is the Proton acceptor of the active site.

The protein belongs to the RNase Z family. In terms of assembly, homodimer. Zn(2+) serves as cofactor.

The enzyme catalyses Endonucleolytic cleavage of RNA, removing extra 3' nucleotides from tRNA precursor, generating 3' termini of tRNAs. A 3'-hydroxy group is left at the tRNA terminus and a 5'-phosphoryl group is left at the trailer molecule.. Functionally, zinc phosphodiesterase, which displays some tRNA 3'-processing endonuclease activity. Probably involved in tRNA maturation, by removing a 3'-trailer from precursor tRNA. The sequence is that of Ribonuclease Z from Pyrococcus abyssi (strain GE5 / Orsay).